Consider the following 210-residue polypeptide: Probable GTP-binding protein EngB (210 aa).

The region spanning 25–199 (TGIEVAFAGR…RQKLDTWFNE (175 aa)) is the EngB-type G domain. GTP is bound by residues 33–40 (GRSNAGKS), 60–64 (GRTQL), 78–81 (DLPG), 145–148 (TKAD), and 178–180 (FSS). The Mg(2+) site is built by Ser-40 and Thr-62.

Belongs to the TRAFAC class TrmE-Era-EngA-EngB-Septin-like GTPase superfamily. EngB GTPase family. Requires Mg(2+) as cofactor.

In terms of biological role, necessary for normal cell division and for the maintenance of normal septation. The polypeptide is Probable GTP-binding protein EngB (Escherichia coli O157:H7).